We begin with the raw amino-acid sequence, 310 residues long: HTH-type transcriptional regulator PunR (310 aa).

The 58-residue stretch at 2 to 59 folds into the HTH lysR-type domain; it reads WSEYSLEVVDAVARNGSFSAAAQELHRVPSAVSYTVRQLEEWLAVPLFERRHRDVELT. A DNA-binding region (H-T-H motif) is located at residues 19–38; it reads FSAAAQELHRVPSAVSYTVR.

This sequence belongs to the LysR transcriptional regulatory family.

It is found in the cytoplasm. In terms of biological role, transcriptional regulator that activates the expression of punC, which encodes a purine nucleoside transporter. The sequence is that of HTH-type transcriptional regulator PunR from Escherichia coli O157:H7.